The primary structure comprises 92 residues: Small ribosomal subunit protein bS20 (92 aa).

It belongs to the bacterial ribosomal protein bS20 family.

Functionally, binds directly to 16S ribosomal RNA. In Rickettsia conorii (strain ATCC VR-613 / Malish 7), this protein is Small ribosomal subunit protein bS20.